The following is a 160-amino-acid chain: Cyanate hydratase (160 aa).

Catalysis depends on residues Arg100, Glu103, and Ser126.

Belongs to the cyanase family.

The catalysed reaction is cyanate + hydrogencarbonate + 3 H(+) = NH4(+) + 2 CO2. Its function is as follows. Catalyzes the reaction of cyanate with bicarbonate to produce ammonia and carbon dioxide. In Penicillium rubens (strain ATCC 28089 / DSM 1075 / NRRL 1951 / Wisconsin 54-1255) (Penicillium chrysogenum), this protein is Cyanate hydratase.